Consider the following 193-residue polypeptide: Imidazoleglycerol-phosphate dehydratase (193 aa).

This sequence belongs to the imidazoleglycerol-phosphate dehydratase family.

Its subcellular location is the cytoplasm. It catalyses the reaction D-erythro-1-(imidazol-4-yl)glycerol 3-phosphate = 3-(imidazol-4-yl)-2-oxopropyl phosphate + H2O. Its pathway is amino-acid biosynthesis; L-histidine biosynthesis; L-histidine from 5-phospho-alpha-D-ribose 1-diphosphate: step 6/9. The polypeptide is Imidazoleglycerol-phosphate dehydratase (Methanoculleus marisnigri (strain ATCC 35101 / DSM 1498 / JR1)).